Here is a 351-residue protein sequence, read N- to C-terminus: Auxin efflux carrier component 5 (351 aa).

The next 10 membrane-spanning stretches (helical) occupy residues 7–27 (VYKVIEAMVPLYVALILGYGS), 39–59 (CDAINRLVCYFTLPLFTIEFT), 71–91 (FIAADVLSKVIIVTVLALWAK), 100–120 (WSITSFSLCTLTNSLVVGVPL), 132–152 (LVVQSSVFQAIVWLTLLLFVL), 210–230 (ILGIAWAFISNRWHLELPGIL), 234–254 (ILIMSKAGTGTAMFNMGIFMA), 271–291 (MVLKFIAGPAAMAIGSIVLGL), 295–315 (VLRVAIIQAALPQSITSFIFA), and 329–349 (VIFGMLVSLPVLVAYYAALEF).

This sequence belongs to the auxin efflux carrier (TC 2.A.69.1) family. Expressed in elongating parts of hypocotyl, cotyledon vasculature and guard cells. Detected in root pericycle and root tip and at later developmental stages in leaves, stems and flowers. Expressed in veins of mature leaves.

Its subcellular location is the endoplasmic reticulum membrane. The protein resides in the cell membrane. Auxin transporter regulating intracellular auxin homeostasis and metabolism. Mediates the auxin transport from the cytosol into the lumen of the endoplasmic reticulum. May also act as an auxin efflux carrier when located to the cell membrane. PIN5 and PIN8 may have an antagonistic/compensatory activity. Involved in unfolded protein response (UPR) activation. Involved in the control of vein patterning. Promotes vein formation. PIN5, PIN6, and PIN8 control vein network geometry, but they are expressed in mutually exclusive domains of leaf vascular cells. In Arabidopsis thaliana (Mouse-ear cress), this protein is Auxin efflux carrier component 5.